The chain runs to 320 residues: Polyprenal reductase 1 (320 aa).

6 helical membrane passes run 5 to 25, 64 to 84, 143 to 163, 200 to 220, 243 to 263, and 266 to 286; these read IVWL…LPLV, FFGH…AATW, MHIL…LSLC, PLMK…WGWI, IIPY…AEIV, and LGLL…FGFV.

It belongs to the steroid 5-alpha reductase family. Polyprenal reductase subfamily. Expressed in roots and flowers.

It localises to the cell membrane. The enzyme catalyses a di-trans,poly-cis-dolichal + NADP(+) = a di-trans,poly-cis-polyprenal + NADPH + H(+). Its pathway is protein modification; protein glycosylation. Functionally, plays a key role in early steps of protein N-linked glycosylation by being involved in the conversion of polyprenol into dolichol. Acts as a polyprenal reductase that mediates the reduction of polyprenal into dolichal in a NADP-dependent mechanism. Dolichols are required for the synthesis of dolichol-linked monosaccharides and the oligosaccharide precursor used for N-glycosylation. Involved in the regulation of plant growth and reproductive processes. The sequence is that of Polyprenal reductase 1 from Arabidopsis thaliana (Mouse-ear cress).